Reading from the N-terminus, the 218-residue chain is Small ribosomal subunit protein uS3 (218 aa).

The region spanning 40–109 (IRKIINTEYS…DVSINIREVK (70 aa)) is the KH type-2 domain.

This sequence belongs to the universal ribosomal protein uS3 family. In terms of assembly, part of the 30S ribosomal subunit. Forms a tight complex with proteins S10 and S14.

Its function is as follows. Binds the lower part of the 30S subunit head. Binds mRNA in the 70S ribosome, positioning it for translation. The chain is Small ribosomal subunit protein uS3 from Orientia tsutsugamushi (strain Boryong) (Rickettsia tsutsugamushi).